The following is a 549-amino-acid chain: Chaperonin GroEL 3 (549 aa).

Residues 29–32 (TLGP), 86–90 (DGTTT), Gly-414, 477–479 (NAA), and Asp-493 each bind ATP.

Belongs to the chaperonin (HSP60) family. As to quaternary structure, forms a cylinder of 14 subunits composed of two heptameric rings stacked back-to-back. Interacts with the co-chaperonin GroES.

Its subcellular location is the cytoplasm. It carries out the reaction ATP + H2O + a folded polypeptide = ADP + phosphate + an unfolded polypeptide.. Its function is as follows. Together with its co-chaperonin GroES, plays an essential role in assisting protein folding. The GroEL-GroES system forms a nano-cage that allows encapsulation of the non-native substrate proteins and provides a physical environment optimized to promote and accelerate protein folding. The sequence is that of Chaperonin GroEL 3 from Frankia casuarinae (strain DSM 45818 / CECT 9043 / HFP020203 / CcI3).